Consider the following 1226-residue polypeptide: Chromosome-associated kinesin KIF4 (1226 aa).

Positions 8–337 (PVRVALRCRP…LRYADRARKI (330 aa)) constitute a Kinesin motor domain. Position 87 to 94 (87 to 94 (GQTGSGKT)) interacts with ATP. Residues 351-1006 (ELQRLKLQVQ…YKQKLALLHV (656 aa)) adopt a coiled-coil conformation. A compositionally biased stretch (acidic residues) spans 494 to 505 (EAASFPVPEEDS). 3 disordered regions span residues 494–516 (EAAS…GFTT), 722–741 (QRQK…GMEG), and 1052–1078 (DLLS…KQSK). Over residues 722–735 (QRQKEAMEKRKDSQ) the composition is skewed to basic and acidic residues. Residues 1007–1226 (ASGKKLHNIL…SGCSAITEDE (220 aa)) are globular. The span at 1053-1064 (LLSESESEEESD) shows a compositional bias: acidic residues.

This sequence belongs to the TRAFAC class myosin-kinesin ATPase superfamily. Kinesin family. Chromokinesin subfamily. It depends on [2Fe-2S] cluster as a cofactor. Requires [4Fe-4S] cluster as cofactor. As to expression, expressed in oocytes, eggs, testes and brain.

The protein localises to the nucleus. It localises to the chromosome. The protein resides in the cytoplasm. Its subcellular location is the cytoskeleton. Functionally, iron-sulfur (Fe-S) cluster binding motor protein that has a role in chromosome segregation during mitosis. Required for mitotic chromosomal positioning and bipolar spindle stabilization. The polypeptide is Chromosome-associated kinesin KIF4 (kif4) (Xenopus laevis (African clawed frog)).